The sequence spans 154 residues: UPF0178 protein ABC1688 (154 aa).

Belongs to the UPF0178 family.

This is UPF0178 protein ABC1688 from Shouchella clausii (strain KSM-K16) (Alkalihalobacillus clausii).